The following is a 117-amino-acid chain: MNSFVSTVLLLSVTIALVSGYPSQLQTTCVTKAKSCTMFFLNGVYCTECTYSGTLELKIGSTCTFSIYEKKVASQPNENSQNEVAQCKQSSCYSNQYVPVDCAAAFGNEYITYIENQ.

The first 20 residues, 1–20 (MNSFVSTVLLLSVTIALVSG), serve as a signal peptide directing secretion.

This sequence belongs to the UPF0375 family. In terms of tissue distribution, expressed in the uterine epithelium.

Its subcellular location is the secreted. Negatively regulates the egg-laying rate by promoting retention of fertilized eggs. The polypeptide is UPF0375 protein Y45F10C.2 (Caenorhabditis elegans).